A 246-amino-acid polypeptide reads, in one-letter code: Uridylate kinase (246 aa).

Residue 19–22 (KISG) coordinates ATP. Position 61 (G61) interacts with UMP. ATP is bound by residues G62 and R66. Residues D81 and 142 to 149 (TGNPFFTT) each bind UMP. Residues T169, Q170, Y175, and D178 each coordinate ATP.

The protein belongs to the UMP kinase family. As to quaternary structure, homohexamer.

Its subcellular location is the cytoplasm. The enzyme catalyses UMP + ATP = UDP + ADP. The protein operates within pyrimidine metabolism; CTP biosynthesis via de novo pathway; UDP from UMP (UMPK route): step 1/1. Inhibited by UTP. Its function is as follows. Catalyzes the reversible phosphorylation of UMP to UDP. The protein is Uridylate kinase of Wolbachia sp. subsp. Brugia malayi (strain TRS).